Here is a 451-residue protein sequence, read N- to C-terminus: Bifunctional protein GlmU (451 aa).

The interval 1–229 is pyrophosphorylase; sequence MQRHAIILAA…FDEIIGVNDR (229 aa). Residues 8-11, K22, Q72, and 77-78 contribute to the UDP-N-acetyl-alpha-D-glucosamine site; these read LAAG and GT. D102 provides a ligand contact to Mg(2+). Positions 139, 154, and 227 each coordinate UDP-N-acetyl-alpha-D-glucosamine. N227 is a binding site for Mg(2+). Residues 230–250 are linker; sequence LMLSEAEKALQQRINRYHMEN. Residues 251-451 form an N-acetyltransferase region; it reads GVTIIDPSST…QVNKEGYLKK (201 aa). Residues R332 and K350 each coordinate UDP-N-acetyl-alpha-D-glucosamine. The active-site Proton acceptor is H362. Residues Y365 and N376 each contribute to the UDP-N-acetyl-alpha-D-glucosamine site. Residues 385–386, A422, and R439 each bind acetyl-CoA; that span reads NY.

The protein in the N-terminal section; belongs to the N-acetylglucosamine-1-phosphate uridyltransferase family. It in the C-terminal section; belongs to the transferase hexapeptide repeat family. Homotrimer. Mg(2+) serves as cofactor.

Its subcellular location is the cytoplasm. The catalysed reaction is alpha-D-glucosamine 1-phosphate + acetyl-CoA = N-acetyl-alpha-D-glucosamine 1-phosphate + CoA + H(+). It catalyses the reaction N-acetyl-alpha-D-glucosamine 1-phosphate + UTP + H(+) = UDP-N-acetyl-alpha-D-glucosamine + diphosphate. It functions in the pathway nucleotide-sugar biosynthesis; UDP-N-acetyl-alpha-D-glucosamine biosynthesis; N-acetyl-alpha-D-glucosamine 1-phosphate from alpha-D-glucosamine 6-phosphate (route II): step 2/2. The protein operates within nucleotide-sugar biosynthesis; UDP-N-acetyl-alpha-D-glucosamine biosynthesis; UDP-N-acetyl-alpha-D-glucosamine from N-acetyl-alpha-D-glucosamine 1-phosphate: step 1/1. It participates in bacterial outer membrane biogenesis; LPS lipid A biosynthesis. Catalyzes the last two sequential reactions in the de novo biosynthetic pathway for UDP-N-acetylglucosamine (UDP-GlcNAc). The C-terminal domain catalyzes the transfer of acetyl group from acetyl coenzyme A to glucosamine-1-phosphate (GlcN-1-P) to produce N-acetylglucosamine-1-phosphate (GlcNAc-1-P), which is converted into UDP-GlcNAc by the transfer of uridine 5-monophosphate (from uridine 5-triphosphate), a reaction catalyzed by the N-terminal domain. The polypeptide is Bifunctional protein GlmU (Staphylococcus epidermidis).